A 507-amino-acid polypeptide reads, in one-letter code: Arabinose import ATP-binding protein AraG (507 aa).

ABC transporter domains lie at 14–249 and 249–505; these read LRFN…MVGR and RDIQ…LPRT. ATP is bound at residue 46–53; that stretch reads GENGAGKS.

The protein belongs to the ABC transporter superfamily. Arabinose importer (TC 3.A.1.2.2) family. The complex is composed of two ATP-binding proteins (AraG), two transmembrane proteins (AraH) and a solute-binding protein (AraF).

The protein resides in the cell inner membrane. It carries out the reaction L-arabinose(out) + ATP + H2O = L-arabinose(in) + ADP + phosphate + H(+). Its function is as follows. Part of the ABC transporter complex AraFGH involved in arabinose import. Responsible for energy coupling to the transport system. This Pseudomonas syringae pv. syringae (strain B728a) protein is Arabinose import ATP-binding protein AraG.